Reading from the N-terminus, the 345-residue chain is MEFLSKYTACLSNWGLNLEPGLQTVGAAVLLTTGTLFIASRVLTFVRVLLSLFVLPGKPLRSFGPKGSWAVVTGASDGLGKEFSLQLARAGFNIVLVSRTASKLTTLAEEITTKHSVQTKTLAMDYAANNDADYEELKAIVDGLDVAVLINNVGKSHDIPTPFALTPEDEMTDIVTINCLGTLRTTQLIIPGMMQRKRGLVLTMGSFGGLLPTPLLATYSGSKAFLQQWSTSLGSELEPYGITVELVQAYLITSAMSKVRRTSATIPDPRAFVKAVLSKIGRNGGSPGYAYSSSPYWSHGLMAWFLTCVMQPMGKLVVGQNKSMHEAIRKRALRKAEREKGKKST.

A helical membrane pass occupies residues 26 to 46 (GAAVLLTTGTLFIASRVLTFV). NADP(+)-binding residues include V71, D125, D133, N152, Y219, K223, I252, and S254. The active-site Proton donor is the Y219. K223 functions as the Lowers pKa of active site Tyr in the catalytic mechanism.

The protein belongs to the short-chain dehydrogenases/reductases (SDR) family.

It is found in the endoplasmic reticulum membrane. The catalysed reaction is a very-long-chain (3R)-3-hydroxyacyl-CoA + NADP(+) = a very-long-chain 3-oxoacyl-CoA + NADPH + H(+). Its pathway is lipid metabolism; fatty acid biosynthesis. In terms of biological role, component of the microsomal membrane bound fatty acid elongation system, which produces the 26-carbon very long-chain fatty acids (VLCFA) from palmitate. Catalyzes the reduction of the 3-ketoacyl-CoA intermediate that is formed in each cycle of fatty acid elongation. VLCFAs serve as precursors for ceramide and sphingolipids. This is Very-long-chain 3-oxoacyl-CoA reductase from Aspergillus fumigatus (strain CBS 144.89 / FGSC A1163 / CEA10) (Neosartorya fumigata).